The following is a 192-amino-acid chain: Orotate phosphoribosyltransferase (192 aa).

116–124 contributes to the 5-phospho-alpha-D-ribose 1-diphosphate binding site; it reads EDIVTTGLS. Orotate-binding residues include T120 and R148.

It belongs to the purine/pyrimidine phosphoribosyltransferase family. PyrE subfamily. In terms of assembly, homodimer. The cofactor is Mg(2+).

The catalysed reaction is orotidine 5'-phosphate + diphosphate = orotate + 5-phospho-alpha-D-ribose 1-diphosphate. It participates in pyrimidine metabolism; UMP biosynthesis via de novo pathway; UMP from orotate: step 1/2. Functionally, catalyzes the transfer of a ribosyl phosphate group from 5-phosphoribose 1-diphosphate to orotate, leading to the formation of orotidine monophosphate (OMP). The polypeptide is Orotate phosphoribosyltransferase (Brucella canis (strain ATCC 23365 / NCTC 10854 / RM-666)).